The sequence spans 512 residues: Probable cytochrome P450 6d2 (512 aa).

Cys457 is a heme binding site.

The protein belongs to the cytochrome P450 family. The cofactor is heme.

Its subcellular location is the endoplasmic reticulum membrane. It localises to the microsome membrane. May be involved in the metabolism of insect hormones and in the breakdown of synthetic insecticides. This is Probable cytochrome P450 6d2 (Cyp6d2) from Drosophila melanogaster (Fruit fly).